Consider the following 124-residue polypeptide: Kinocilin (124 aa).

A run of 2 helical transmembrane segments spans residues 13–33 (LQLACVALGLVAGSIIIGISV) and 40–60 (MGGVFIGAAVLGLLILAYPFL). Residues 80-124 (PHPGADHGEGRSSTNGNKEGARSSLSTVSRTLEKLKPGTRGAEEC) are disordered. The span at 90 to 109 (RSSTNGNKEGARSSLSTVSR) shows a compositional bias: polar residues. The segment covering 110 to 124 (TLEKLKPGTRGAEEC) has biased composition (basic and acidic residues).

It is found in the membrane. Functionally, may play a role in stabilizing dense microtubular networks or in vesicular trafficking. In Homo sapiens (Human), this protein is Kinocilin (KNCN).